The sequence spans 553 residues: Heterochromatin protein 1-binding protein 3 (553 aa).

At Ala2 the chain carries N-acetylalanine. Ser6 carries the post-translational modification Phosphoserine. Residues 30–131 are disordered; that stretch reads LGEKADDSTM…SKEKEKKVKK (102 aa). The residue at position 51 (Thr51) is a Phosphothreonine. Over residues 60-71 the composition is skewed to acidic residues; that stretch reads GEEEKPEPDGSS. Lys64 is covalently cross-linked (Glycyl lysine isopeptide (Lys-Gly) (interchain with G-Cter in SUMO2)). At Thr85 the chain carries Phosphothreonine. Residues 91-127 are compositionally biased toward basic and acidic residues; that stretch reads REAEQPKGEPESGEKEESKSAEETKKEEKDQSKEKEK. Lys97 is covalently cross-linked (Glycyl lysine isopeptide (Lys-Gly) (interchain with G-Cter in SUMO2)). A phosphoserine mark is found at Ser142, Ser155, and Ser156. In terms of domain architecture, H15 1 spans 157 to 232; sequence PRPKMDAILT…GASGSFVVVQ (76 aa). An N6-acetyllysine modification is found at Lys190. Residues 231 to 251 form a disordered region; that stretch reads VQKSKTPQKSKNRKKGSAVDP. Residues 236-246 show a composition bias toward basic residues; the sequence is TPQKSKNRKKG. The residue at position 247 (Ser247) is a Phosphoserine. The PxVxL motif motif lies at 253–257; the sequence is PQVKL. H15 domains are found at residues 253–328 and 335–411; these read PQVK…QLKK and LGGS…QLCF. Lys256 participates in a covalent cross-link: Glycyl lysine isopeptide (Lys-Gly) (interchain with G-Cter in SUMO2). A disordered region spans residues 422–553; the sequence is PKKVSDGSED…MKKKSFKTKK (132 aa). Positions 428 to 449 are enriched in acidic residues; sequence GSEDEDEEEDEEESSEDSEDEE. A phosphoserine mark is found at Ser441, Ser442, and Ser445. Basic residues-rich tracts occupy residues 488–509 and 542–553; these read GKVRPLPKKAPPKAKTPARKGR and SAMKKKSFKTKK.

Interacts (via PxVxL motif) with CBX5.

The protein localises to the nucleus. It localises to the chromosome. Its function is as follows. Component of heterochromatin that maintains heterochromatin integrity during G1/S progression and regulates the duration of G1 phase to critically influence cell proliferative capacity. May play a role in hypoxia-induced oncogenesis. The chain is Heterochromatin protein 1-binding protein 3 (Hp1bp3) from Rattus norvegicus (Rat).